Consider the following 275-residue polypeptide: Phosphonoacetaldehyde hydrolase (275 aa).

Catalysis depends on D15, which acts as the Nucleophile. Mg(2+) contacts are provided by D15 and A17. K56 functions as the Schiff-base intermediate with substrate in the catalytic mechanism. D189 serves as a coordination point for Mg(2+).

This sequence belongs to the HAD-like hydrolase superfamily. PhnX family. Homodimer. It depends on Mg(2+) as a cofactor.

It carries out the reaction phosphonoacetaldehyde + H2O = acetaldehyde + phosphate + H(+). Involved in phosphonate degradation. The protein is Phosphonoacetaldehyde hydrolase of Pseudomonas aeruginosa (strain UCBPP-PA14).